The primary structure comprises 1372 residues: MTPSSNSVKTSRFNKVRTDIIGDTDLPNNLIKSLSKSPPHFYNHIIDKKGLRDIIAWAYKSHGIAATAELADDIKDLGFKYATVAAVSISIDDLKIPKEKKFLLEQAEEQITATEERYRLGEITEVERHTKVIDTWTETNERLVLAIKKNFNENDPLNSVWMMANSGARGNISQVRQLVGMRGLMANPQGEIIDLPIRANFKEGLTVTEYVISSYGARKGLVDTALRTADSGYLTRRLVDVAQDVIVREDDCGTERGIVVEADEKGNYGTKLVGRLAAQSVVVDNENRVLVRRNREIDLITACRIEAADIPSVIVRSPLTCEAARSVCRKCYGWALAHNALVDLGEAVGIIAAQSIGEPGTQLTMRTFHTGGVSTAETGLVRSTLEGSIIFGSKARVRPYRTPHGVEAQQAETDFVLQVKPNNGKKSQKVDITNGSLLFVSDSQEVASDTILAQIISGSSVKKSVEKATKDVICDLAGQVRYDEALQPKEVIDRQGSATHKATRLGRVWVLSGDVYNLPPNAKPVIQGNSKVEEGEVLAESRLSSEHGGVVRLRESTGDSREVQIVTTSMTLKDFKLLGESTHSGEIWHLEAKDTTRYLLKTQPGSKIGNGEVIAELADERFRTKTGGLVKYAPGGLSIKKARSAKNGYEVNKGGTLLWIPQETHEINKDISLLMIEDGQWIEDKTEVVKDIFSQIAGIVTVTQKNDILREITVRPGTLYPCNESKVIERFKGEGLLVDEEEIISKNLKAEKRVFVQSVETSEGPQLLIRPVEEYTIPEVAHLPELAIVKQNSGPYLGLKATQRLNFKDGELIKSVEGVELLKTQLILETFDTTPQMTVDVEKVTDKRSKTLERLQLVILETLLVRRDTISDASHGSTHTELQVNDGDLVKSGDVVATTQILCKEVGIVQLPKQIDNEPIRRIIVERDQDTMTIPLGSAPLVSVGQRLVDGDLLAENDPSPCCGQVETIKNNTIIIRIGRPYMISSDSTLHVKDRELVQRGDSLALLVFERQKTGDIVQGLPRIEELLEARRPRDSAVLCKQPGVLTLRHDEETDSSIAVIKSANGEETEYPILLGRNLMVSVGQHIKAGELLTDGPINPHELLEYLFADLRSRKPLMEAAREAIAKVQSRLVTEVQNVYKSQGVTIHNKHIEVIVRQMTSKVRIEDAGETTLLPGELIELRHVEKVNKAMFMTSSSPAVFIPELLGITKASLNTDSFISAASFQETTRVLTEAAIEGKTDYLRGLKENVIIGRLIPAGTGFSGFEEELRSEAGPHPDILDEDPAGYRRMQNLRPDYTVDMPAAASASPAALLDDPSDDELEATRSRHGIEVTTSNTAAFTRPVIVNKIMEDQILDPDIIASLQEEGLLTRE.

The Zn(2+) site is built by Cys252, Cys321, Cys328, and Cys331.

Belongs to the RNA polymerase beta' chain family. RpoC2 subfamily. As to quaternary structure, in plastids the minimal PEP RNA polymerase catalytic core is composed of four subunits: alpha, beta, beta', and beta''. When a (nuclear-encoded) sigma factor is associated with the core the holoenzyme is formed, which can initiate transcription. The cofactor is Zn(2+).

It localises to the plastid. Its subcellular location is the organellar chromatophore. It catalyses the reaction RNA(n) + a ribonucleoside 5'-triphosphate = RNA(n+1) + diphosphate. In terms of biological role, DNA-dependent RNA polymerase catalyzes the transcription of DNA into RNA using the four ribonucleoside triphosphates as substrates. In Paulinella chromatophora, this protein is DNA-directed RNA polymerase subunit beta''.